Reading from the N-terminus, the 888-residue chain is Patched domain-containing protein 1 (888 aa).

A helical transmembrane segment spans residues 20–40; sequence FIASHPVFFASAPVLISILLG. Residues asparagine 77, asparagine 133, and asparagine 167 are each glycosylated (N-linked (GlcNAc...) asparagine). The SSD domain maps to 268–427; it reads SERYLVTSLI…LSFYGSSLVF (160 aa). Transmembrane regions (helical) follow at residues 273–293 and 298–318; these read VTSLILVVTMAILCCSMQDCV and WLGLLGLVTISLATLTAAGII. Residues asparagine 319 and asparagine 326 are each glycosylated (N-linked (GlcNAc...) asparagine). 4 consecutive transmembrane segments (helical) span residues 328 to 348, 373 to 393, 407 to 427, and 502 to 522; these read TFLGVPFVMLGHGLYGTFEML, LSFSLTTAMYLVTFGIGASPF, CIAILFNYLYVLSFYGSSLVF, and PFVVLFYLIYISFALMGYLQV. N-linked (GlcNAc...) asparagine glycosylation is found at asparagine 568, asparagine 599, and asparagine 608. 2 helical membrane passes run 707–727 and 738–758; these read ALFLLFFSAFLVADSLINVWI and VIGFMTLWKVELDCISVLCLI. N-linked (GlcNAc...) asparagine glycosylation occurs at asparagine 762. A helical transmembrane segment spans residues 795-815; that stretch reads GVAILQSYLCYIVGLFPLAAV. N-linked (GlcNAc...) asparagine glycosylation is present at asparagine 818. Residues 826–846 traverse the membrane as a helical segment; it reads CLFLIAFVTFFHCFAILPVIL.

It belongs to the patched family. As to expression, broadly expressed in the brain. Selectively expressed in the thalamic reticular nucleus (TRN) in early development and continues to be enriched in this structure throughout adult life.

The protein resides in the cell membrane. The protein localises to the cell projection. Its subcellular location is the dendritic spine. In terms of biological role, required for the development and function of the thalamic reticular nucleus (TRN), a part of the thalamus that is critical for thalamocortical transmission, generation of sleep rhythms, sensorimotor processing and attention. Can bind cholesterol in vitro. In Mus musculus (Mouse), this protein is Patched domain-containing protein 1.